The primary structure comprises 32 residues: Jingzhaotoxin F4-32.60 (32 aa).

3 disulfide bridges follow: Cys-2–Cys-17, Cys-9–Cys-22, and Cys-16–Cys-29. At Asp-31 the chain carries Aspartic acid 1-amide.

Belongs to the neurotoxin 10 (Hwtx-1) family. 30 (Jztx-14) subfamily. Amidated as well as non-amidated forms are found in the venom. In terms of tissue distribution, expressed by the venom gland.

The protein localises to the secreted. Functionally, probable ion channel inhibitor. This chain is Jingzhaotoxin F4-32.60, found in Chilobrachys guangxiensis (Chinese earth tiger tarantula).